Consider the following 369-residue polypeptide: Tyrosinase-like protein orsC (369 aa).

An N-terminal signal peptide occupies residues 1–23; it reads MLAFNPLVTALAALIFLFCQANA. The Cu cation site is built by H112 and H121. Residues N165, N179, N253, and N272 are each glycosylated (N-linked (GlcNAc...) asparagine). H315 is a Cu cation binding site.

The protein operates within secondary metabolite biosynthesis. In terms of biological role, tyrosinase-like protein; part of the gene cluster that mediates the biosynthesis of orsellinic acid, as well as of the cathepsin K inhibitors F9775 A and F9775 B. The non-reducing polyketide synthase orsA produces orsellinic acid by condensing acetyl-CoA with 3 malonyl-CoA units. Further modifications by the decarboxylase orsB and the tyrosinase-like protein orsC lead to the production of F9775 A and F9775 B. The functions of orsD and orsE remain unclear since only orsB and orsC are required to convert orsellinic acid into F9775 A and F9775 B. In Emericella nidulans (strain FGSC A4 / ATCC 38163 / CBS 112.46 / NRRL 194 / M139) (Aspergillus nidulans), this protein is Tyrosinase-like protein orsC.